A 178-amino-acid chain; its full sequence is MDVAFDLVNYAYASRLRLLKEMQERDARRKLSKKEAQHHMAIVAAQNASRELEIAQQQRAGKEAQLYQELTSLNTLSSAALDHHHLHIERLAAEITIRGQVLDDARIAQEQAETAASETKALWVKRSEARHKWQQIQDDLRRAVDILSEAAGEIEADDEILLRYGRGSLDQRSRNEFR.

This is an uncharacterized protein from Sinorhizobium fredii (strain NBRC 101917 / NGR234).